The following is a 464-amino-acid chain: ATP synthase subunit beta (464 aa).

ATP is bound at residue 153–160 (GGAGVGKT).

The protein belongs to the ATPase alpha/beta chains family. As to quaternary structure, F-type ATPases have 2 components, CF(1) - the catalytic core - and CF(0) - the membrane proton channel. CF(1) has five subunits: alpha(3), beta(3), gamma(1), delta(1), epsilon(1). CF(0) has three main subunits: a(1), b(2) and c(9-12). The alpha and beta chains form an alternating ring which encloses part of the gamma chain. CF(1) is attached to CF(0) by a central stalk formed by the gamma and epsilon chains, while a peripheral stalk is formed by the delta and b chains.

The protein resides in the cell membrane. The catalysed reaction is ATP + H2O + 4 H(+)(in) = ADP + phosphate + 5 H(+)(out). In terms of biological role, produces ATP from ADP in the presence of a proton gradient across the membrane. The catalytic sites are hosted primarily by the beta subunits. This is ATP synthase subunit beta from Alkaliphilus oremlandii (strain OhILAs) (Clostridium oremlandii (strain OhILAs)).